A 438-amino-acid chain; its full sequence is Probable 26S proteasome regulatory subunit rpn-6.1 (438 aa).

Residues 1–10 show a composition bias toward basic and acidic residues; sequence MRETSSREDT. Residues 1–30 form a disordered region; sequence MRETSSREDTNNIGKAPEMSGGTIMDTMTS. The PCI domain maps to 239–408; that stretch reads DFKTAFSYFY…GMLIVFEIAV (170 aa).

The protein belongs to the proteasome subunit S9 family. As to quaternary structure, component of the lid subcomplex of the 19S proteasome regulatory particle complex (also named PA700 complex). The 26S proteasome consists of a 20S proteasome core and two 19S regulatory subunits.

Its function is as follows. Component of the lid subcomplex of the 26S proteasome, a multiprotein complex involved in the ATP-dependent degradation of ubiquitinated proteins. In the complex, rpn-6.1 is required for proteasome assembly. Plays a key role in increased proteasome activity in response to proteotoxic stress: induced by daf-16, promoting enhanced assembly of the 26S proteasome and higher proteasome activity, leading to extended lifespan. This Caenorhabditis elegans protein is Probable 26S proteasome regulatory subunit rpn-6.1.